A 281-amino-acid chain; its full sequence is Spermatogenesis-associated serine-rich protein 1 (281 aa).

Residues 1 to 14 (MEAARDAQHSDVLE) show a composition bias toward basic and acidic residues. The segment at 1–92 (MEAARDAQHS…SSSAQANRSL (92 aa)) is disordered. Residues 21-37 (SRTSSHQNRRASLSSDG) show a composition bias toward polar residues. Threonine 53 bears the Phosphothreonine mark. Polar residues predominate over residues 54–65 (PSDTASGLGQKT). Positions 66 to 85 (SSTSSSSSSSSSSSPSSSSS) are enriched in low complexity. Residues serine 71, serine 74, serine 77, serine 78, serine 79, and serine 91 each carry the phosphoserine modification.

In terms of tissue distribution, detected in pachytene spermatocytes and round spermatids.

This is Spermatogenesis-associated serine-rich protein 1 (Spats1) from Rattus norvegicus (Rat).